A 1021-amino-acid chain; its full sequence is Chondroitin sulfate ABC endolyase (1021 aa).

An N-terminal signal peptide occupies residues 1–24; the sequence is MPIFRFTALAMTLGLLSAPYNAMA. Residues histidine 43, methionine 70, glutamine 73, and aspartate 211 each coordinate Na(+). Histidine 501 (proton acceptor) is an active-site residue. The Proton donor role is filled by tyrosine 508.

This sequence belongs to the polysaccharide lyase 8 family. In terms of assembly, monomer.

The protein resides in the periplasm. It catalyses the reaction Endolytic cleavage of (1-&gt;4)-beta-galactosaminic bonds between N-acetylgalactosamine and either D-glucuronic acid or L-iduronic acid to produce a mixture of Delta(4)-unsaturated oligosaccharides of different sizes that are ultimately degraded to Delta(4)-unsaturated tetra- and disaccharides.. With respect to regulation, is inhibited by Zn(2+), Ni(2+), Fe(2+) and Cu(2+). Endolytic, broad-specificity glycosaminoglycan lyase, which degrades the polysaccharides chondroitin, chondroitin-4-sulfate, chondroitin-6-sulfate, dermatan sulfate and to a lesser extent hyaluronan, by beta-elimination of 1,4-hexosaminidic bond to unsaturated tetrasaccharides and disaccharides. Is not active against keratan sulfate, heparan sulfate, and heparin. Is able to promote functional recovery in the injured central nervous system (CNS), via its role in the disruption of the normal organization of the extracellular matrix (ECM). This is Chondroitin sulfate ABC endolyase from Proteus vulgaris.